Reading from the N-terminus, the 268-residue chain is Lipopolysaccharide core heptose(I) kinase WaaP (268 aa).

Phosphotyrosine; by autocatalysis occurs at positions 30, 48, and 98. Aspartate 163 is a catalytic residue. Phosphotyrosine; by autocatalysis is present on residues tyrosine 165, tyrosine 211, tyrosine 231, tyrosine 258, and tyrosine 264.

It belongs to the protein kinase superfamily. KdkA/RfaP family. Interacts with acyl-AcpP. The WaaP hydrophobic channel can accommodate acyl chains of different lengths, but myristyl-ACP is likely its physiological binding partner. Mg(2+) is required as a cofactor.

It localises to the cytoplasm. The catalysed reaction is an L-alpha-D-Hep-(1-&gt;3)-L-alpha-D-Hep-(1-&gt;5)-[alpha-Kdo-(2-&gt;4)]-alpha-Kdo-(2-&gt;6)-lipid A + ATP = an L-alpha-D-Hep-(1-&gt;3)-4-O-phospho-L-alpha-D-Hep-(1-&gt;5)-[alpha-Kdo-(2-&gt;4)]-alpha-Kdo-(2-&gt;6)-lipid A + ADP + H(+). The enzyme catalyses L-tyrosyl-[protein] + ATP = O-phospho-L-tyrosyl-[protein] + ADP + H(+). Its pathway is bacterial outer membrane biogenesis; LPS core biosynthesis. Acylated-acyl carrier protein (acyl-ACP) acts as a very tightly bound cofactor necessary for the production and stability of active WaaP kinase. In terms of biological role, kinase involved in the biosynthesis of the core oligosaccharide region of lipopolysaccharide (LPS). Catalyzes the phosphorylation of heptose I (HepI), the first heptose added to the Kdo2-lipid A module. Also has protein-tyrosine kinase activity: autophosphorylates on all Tyr residues; in vitro can phosphorylate poly(Glu,Tyr). This Pseudomonas aeruginosa (strain ATCC 15692 / DSM 22644 / CIP 104116 / JCM 14847 / LMG 12228 / 1C / PRS 101 / PAO1) protein is Lipopolysaccharide core heptose(I) kinase WaaP.